A 437-amino-acid polypeptide reads, in one-letter code: GTPase Obg (437 aa).

The Obg domain occupies 2–160 (SMFLDTAKIS…RQLELELKIL (159 aa)). The OBG-type G domain occupies 161–338 (ADVGLVGFPS…LLEATAELLA (178 aa)). Residues 167 to 174 (GFPSVGKS), 192 to 196 (FTTIV), 214 to 217 (DLPG), 284 to 287 (NKMD), and 319 to 321 (SSL) contribute to the GTP site. 2 residues coordinate Mg(2+): Ser-174 and Thr-194. An OCT domain is found at 359 to 437 (GFAKTEKDFE…IGKFEFEFVD (79 aa)).

Belongs to the TRAFAC class OBG-HflX-like GTPase superfamily. OBG GTPase family. As to quaternary structure, monomer. Mg(2+) is required as a cofactor.

The protein localises to the cytoplasm. In terms of biological role, an essential GTPase which binds GTP, GDP and possibly (p)ppGpp with moderate affinity, with high nucleotide exchange rates and a fairly low GTP hydrolysis rate. Plays a role in control of the cell cycle, stress response, ribosome biogenesis and in those bacteria that undergo differentiation, in morphogenesis control. This chain is GTPase Obg, found in Streptococcus pyogenes serotype M2 (strain MGAS10270).